The following is a 199-amino-acid chain: Peroxiredoxin 2 (199 aa).

Positions Ala8 to Phe166 constitute a Thioredoxin domain. Catalysis depends on Cys53, which acts as the Cysteine sulfenic acid (-SOH) intermediate.

This sequence belongs to the peroxiredoxin family. AhpC/Prx1 subfamily. Homodimer; disulfide-linked, upon oxidation.

It carries out the reaction a hydroperoxide + [thioredoxin]-dithiol = an alcohol + [thioredoxin]-disulfide + H2O. Thiol-specific peroxidase that catalyzes the reduction of hydrogen peroxide and organic hydroperoxides to water and alcohols, respectively. Plays a role in cell protection against oxidative stress by detoxifying peroxides and as sensor of hydrogen peroxide-mediated signaling events. The protein is Peroxiredoxin 2 (tsa-2) of Brugia malayi (Filarial nematode worm).